Reading from the N-terminus, the 508-residue chain is Lysine--tRNA ligase (508 aa).

Residues Glu418 and Glu425 each contribute to the Mg(2+) site.

This sequence belongs to the class-II aminoacyl-tRNA synthetase family. As to quaternary structure, homodimer. Mg(2+) serves as cofactor.

It is found in the cytoplasm. The enzyme catalyses tRNA(Lys) + L-lysine + ATP = L-lysyl-tRNA(Lys) + AMP + diphosphate. This is Lysine--tRNA ligase from Burkholderia pseudomallei (strain 1710b).